Here is a 309-residue protein sequence, read N- to C-terminus: Olfactory receptor 7A10 (309 aa).

The Extracellular segment spans residues 1-25 (MKSWNNTIILEFLLLGISEEPELQA). N-linked (GlcNAc...) asparagine glycosylation is present at N5. The chain crosses the membrane as a helical span at residues 26–46 (FLFGLFLSMYLVTVLGNLLII). Over 47–54 (LATISDSH) the chain is Cytoplasmic. A helical membrane pass occupies residues 55 to 75 (LHTPMYFFLSNLSFVDICFVS). At 76–99 (TTVPKMLVNIQTHNKVITYAGCIT) the chain is on the extracellular side. Cysteines 97 and 189 form a disulfide. The helical transmembrane segment at 100-120 (QMCFFLLFVGLDNFLLTVMAY) threads the bilayer. The Cytoplasmic portion of the chain corresponds to 121-139 (DRFVAICHPLHYMVIMNPQ). A helical transmembrane segment spans residues 140–160 (LCGLLVLASWIMSVLNSMLQS). Residues 161-197 (LMVLPLPFCTHMEIPHFFCEINQVVHLACSDTFLNDI) are Extracellular-facing. Residues 198–217 (VMYFAVALLGGGPLTGILYS) traverse the membrane as a helical segment. The Cytoplasmic segment spans residues 218-237 (YSKIVSSIRAISSAQGKYKA). The helical transmembrane segment at 238-258 (FSTCASHLSVVSLFYGTCLGV) threads the bilayer. Topologically, residues 259-271 (YLSSAATHNSHTG) are extracellular. Residues 272–292 (AAASVMYTVVTPMLNPFIYSL) form a helical membrane-spanning segment. Residues 293–309 (RNKHIKGAMKTFFRGKQ) are Cytoplasmic-facing.

This sequence belongs to the G-protein coupled receptor 1 family.

It localises to the cell membrane. In terms of biological role, odorant receptor. The chain is Olfactory receptor 7A10 (OR7A10) from Homo sapiens (Human).